A 365-amino-acid polypeptide reads, in one-letter code: DNA replication and repair protein RecF (365 aa).

ATP is bound at residue glycine 30–threonine 37.

It belongs to the RecF family.

The protein resides in the cytoplasm. The RecF protein is involved in DNA metabolism; it is required for DNA replication and normal SOS inducibility. RecF binds preferentially to single-stranded, linear DNA. It also seems to bind ATP. This chain is DNA replication and repair protein RecF, found in Streptococcus pneumoniae serotype 2 (strain D39 / NCTC 7466).